Reading from the N-terminus, the 247-residue chain is E3 SUMO-protein ligase NSE2 (247 aa).

Position 1 is an N-acetylmethionine (Met-1). Residues Lys-90 and Lys-107 each participate in a glycyl lysine isopeptide (Lys-Gly) (interchain with G-Cter in SUMO2) cross-link. The residue at position 116 (Ser-116) is a Phosphoserine. Glycyl lysine isopeptide (Lys-Gly) (interchain with G-Cter in SUMO2) cross-links involve residues Lys-125 and Lys-130. The SP-RING-type zinc finger occupies 154-240 (VDEDIIVTQS…LRRAIENHNK (87 aa)). The Zn(2+) site is built by Cys-185, His-187, Cys-210, and Cys-215.

This sequence belongs to the NSE2 family. As to quaternary structure, component of the SMC5-SMC6 complex which consists at least of SMC5, SMC6, NSMCE2, NSMCE1, NSMCE4A or EID3 and NSMCE3. Post-translationally, sumoylated, possibly via autosumoylation.

The protein resides in the nucleus. Its subcellular location is the chromosome. It is found in the telomere. The protein localises to the PML body. Its pathway is protein modification; protein sumoylation. Functionally, E3 SUMO-protein ligase component of the SMC5-SMC6 complex, a complex involved in DNA double-strand break repair by homologous recombination. Is not be required for the stability of the complex. The complex may promote sister chromatid homologous recombination by recruiting the SMC1-SMC3 cohesin complex to double-strand breaks. The complex is required for telomere maintenance via recombination in ALT (alternative lengthening of telomeres) cell lines and mediates sumoylation of shelterin complex (telosome) components which is proposed to lead to shelterin complex disassembly in ALT-associated PML bodies (APBs). Acts as an E3 ligase mediating SUMO attachment to various proteins such as SMC6L1 and TSNAX, the shelterin complex subunits TERF1, TERF2, TINF2 and TERF2IP, RAD51AP1, and maybe the cohesin components RAD21 and STAG2. Required for recruitment of telomeres to PML nuclear bodies. SUMO protein-ligase activity is required for the prevention of DNA damage-induced apoptosis by facilitating DNA repair, and for formation of APBs in ALT cell lines. Required for sister chromatid cohesion during prometaphase and mitotic progression. The protein is E3 SUMO-protein ligase NSE2 (NSMCE2) of Homo sapiens (Human).